A 383-amino-acid chain; its full sequence is NIPA-like protein 2 (383 aa).

Residues N23 and N33 are each glycosylated (N-linked (GlcNAc...) asparagine). The next 7 membrane-spanning stretches (helical) occupy residues 46–66 (IHLFGVLLAILGNLVISISLN), 88–108 (VLWWGGVLLMAVGETGNFAAY), 110–130 (FAPITLIAPLGCVSVTGSAII), 144–164 (LLGTTLAFAGTYLLVNFAPNI), 177–197 (LVGWQFLIYVILEILIFCILL), 209–229 (VILLTLVAILASLTVISVKAV), and 243–263 (LTYPIFYIMFIIMIASCVFQV). Residue N274 is glycosylated (N-linked (GlcNAc...) asparagine). 2 helical membrane passes run 278 to 298 (VVPVNHIFFTISAIIAGIIFY) and 306 to 326 (FLTVFIYLFGCFLSFLGVFLV). The segment at 355 to 383 (QPDSHSLSYGTLPDGSDSTKSQSGEKKEV) is disordered.

The protein belongs to the NIPA family.

Its subcellular location is the membrane. The chain is NIPA-like protein 2 (NIPAL2) from Homo sapiens (Human).